The primary structure comprises 127 residues: Small ribosomal subunit protein eS8 (127 aa).

The tract at residues 1 to 33 is disordered; that stretch reads MAIWQGKSMKKPSGGRAKMNRGKRKYELGREPA.

The protein belongs to the eukaryotic ribosomal protein eS8 family. Part of the 30S ribosomal subunit.

This Methanothermobacter thermautotrophicus (strain ATCC 29096 / DSM 1053 / JCM 10044 / NBRC 100330 / Delta H) (Methanobacterium thermoautotrophicum) protein is Small ribosomal subunit protein eS8 (rps8e).